The sequence spans 106 residues: Large ribosomal subunit protein uL24 (106 aa).

This sequence belongs to the universal ribosomal protein uL24 family. As to quaternary structure, part of the 50S ribosomal subunit.

Functionally, one of two assembly initiator proteins, it binds directly to the 5'-end of the 23S rRNA, where it nucleates assembly of the 50S subunit. Its function is as follows. One of the proteins that surrounds the polypeptide exit tunnel on the outside of the subunit. The sequence is that of Large ribosomal subunit protein uL24 from Blochmanniella floridana.